The primary structure comprises 302 residues: Methionyl-tRNA formyltransferase (302 aa).

Position 108-111 (108-111 (SLLP)) interacts with (6S)-5,6,7,8-tetrahydrofolate.

The protein belongs to the Fmt family.

The enzyme catalyses L-methionyl-tRNA(fMet) + (6R)-10-formyltetrahydrofolate = N-formyl-L-methionyl-tRNA(fMet) + (6S)-5,6,7,8-tetrahydrofolate + H(+). In terms of biological role, attaches a formyl group to the free amino group of methionyl-tRNA(fMet). The formyl group appears to play a dual role in the initiator identity of N-formylmethionyl-tRNA by promoting its recognition by IF2 and preventing the misappropriation of this tRNA by the elongation apparatus. The sequence is that of Methionyl-tRNA formyltransferase from Cereibacter sphaeroides (strain ATCC 17025 / ATH 2.4.3) (Rhodobacter sphaeroides).